Consider the following 109-residue polypeptide: Fluoride-specific ion channel FluC 1 (109 aa).

3 helical membrane-spanning segments follow: residues 21-41 (LFIN…GFFI), 52-72 (IILS…YFLY), and 84-104 (IIFC…GFWI).

It belongs to the fluoride channel Fluc/FEX (TC 1.A.43) family.

Its subcellular location is the cell inner membrane. The catalysed reaction is fluoride(in) = fluoride(out). Functionally, fluoride-specific ion channel. Important for reducing fluoride concentration in the cell, thus reducing its toxicity. This chain is Fluoride-specific ion channel FluC 1, found in Prochlorococcus marinus (strain MIT 9312).